A 265-amino-acid chain; its full sequence is Ribosomal RNA small subunit methyltransferase A (265 aa).

Residues histidine 13, leucine 15, glycine 40, glutamate 62, aspartate 87, and asparagine 106 each contribute to the S-adenosyl-L-methionine site.

It belongs to the class I-like SAM-binding methyltransferase superfamily. rRNA adenine N(6)-methyltransferase family. RsmA subfamily.

It localises to the cytoplasm. The enzyme catalyses adenosine(1518)/adenosine(1519) in 16S rRNA + 4 S-adenosyl-L-methionine = N(6)-dimethyladenosine(1518)/N(6)-dimethyladenosine(1519) in 16S rRNA + 4 S-adenosyl-L-homocysteine + 4 H(+). In terms of biological role, specifically dimethylates two adjacent adenosines (A1518 and A1519) in the loop of a conserved hairpin near the 3'-end of 16S rRNA in the 30S particle. May play a critical role in biogenesis of 30S subunits. In Persephonella marina (strain DSM 14350 / EX-H1), this protein is Ribosomal RNA small subunit methyltransferase A.